Here is a 351-residue protein sequence, read N- to C-terminus: Transaldolase (351 aa).

The Schiff-base intermediate with substrate role is filled by lysine 138.

The protein belongs to the transaldolase family. Type 2 subfamily.

It is found in the cytoplasm. The catalysed reaction is D-sedoheptulose 7-phosphate + D-glyceraldehyde 3-phosphate = D-erythrose 4-phosphate + beta-D-fructose 6-phosphate. Its pathway is carbohydrate degradation; pentose phosphate pathway; D-glyceraldehyde 3-phosphate and beta-D-fructose 6-phosphate from D-ribose 5-phosphate and D-xylulose 5-phosphate (non-oxidative stage): step 2/3. In terms of biological role, transaldolase is important for the balance of metabolites in the pentose-phosphate pathway. This chain is Transaldolase (tal), found in Neisseria meningitidis serogroup A / serotype 4A (strain DSM 15465 / Z2491).